The sequence spans 95 residues: Large ribosomal subunit protein bL25 (95 aa).

Belongs to the bacterial ribosomal protein bL25 family. As to quaternary structure, part of the 50S ribosomal subunit; part of the 5S rRNA/L5/L18/L25 subcomplex. Contacts the 5S rRNA. Binds to the 5S rRNA independently of L5 and L18.

Functionally, this is one of the proteins that binds to the 5S RNA in the ribosome where it forms part of the central protuberance. In Shewanella sediminis (strain HAW-EB3), this protein is Large ribosomal subunit protein bL25.